The sequence spans 233 residues: Uracil-DNA glycosylase (233 aa).

The active-site Proton acceptor is the D70.

The protein belongs to the uracil-DNA glycosylase (UDG) superfamily. UNG family.

It is found in the cytoplasm. It carries out the reaction Hydrolyzes single-stranded DNA or mismatched double-stranded DNA and polynucleotides, releasing free uracil.. In terms of biological role, excises uracil residues from the DNA which can arise as a result of misincorporation of dUMP residues by DNA polymerase or due to deamination of cytosine. This is Uracil-DNA glycosylase from Helicobacter pylori (strain G27).